Consider the following 531-residue polypeptide: T-complex protein 1 subunit zeta (531 aa).

An N-acetylalanine modification is found at alanine 2. Lysine 5 is subject to N6-acetyllysine. Residue glycine 39 coordinates ADP. ATP is bound at residue glycine 39. Mg(2+) is bound at residue aspartate 90. ADP-binding residues include glycine 91, threonine 92, threonine 93, serine 94, threonine 158, and lysine 159. ATP-binding residues include glycine 91, threonine 92, and threonine 93. Lysine 199 is subject to N6-acetyllysine. Position 205 is a phosphoserine (serine 205). A Glycyl lysine isopeptide (Lys-Gly) (interchain with G-Cter in SUMO2) cross-link involves residue lysine 251. Lysine 287, lysine 365, lysine 377, and lysine 388 each carry N6-acetyllysine. Position 411 (alanine 411) interacts with ADP. The ATP site is built by alanine 411, glycine 412, aspartate 496, and lysine 501. Aspartate 496 is an ADP binding site.

This sequence belongs to the TCP-1 chaperonin family. In terms of assembly, component of the chaperonin-containing T-complex (TRiC), a hexadecamer composed of two identical back-to-back stacked rings enclosing a protein folding chamber. Each ring is made up of eight different subunits: TCP1/CCT1, CCT2, CCT3, CCT4, CCT5, CCT6A/CCT6, CCT7, CCT8. Interacts with PACRG.

Its subcellular location is the cytoplasm. It catalyses the reaction ATP + H2O = ADP + phosphate + H(+). Its function is as follows. Component of the chaperonin-containing T-complex (TRiC), a molecular chaperone complex that assists the folding of actin, tubulin and other proteins upon ATP hydrolysis. The TRiC complex mediates the folding of WRAP53/TCAB1, thereby regulating telomere maintenance. This is T-complex protein 1 subunit zeta (CCT6A) from Bos taurus (Bovine).